A 207-amino-acid polypeptide reads, in one-letter code: Thiamine-phosphate synthase (207 aa).

Residues 35–39 (QYRDK) and Asn67 contribute to the 4-amino-2-methyl-5-(diphosphooxymethyl)pyrimidine site. Positions 68 and 86 each coordinate Mg(2+). Thr105 lines the 4-amino-2-methyl-5-(diphosphooxymethyl)pyrimidine pocket. 132–134 (SVT) contacts 2-[(2R,5Z)-2-carboxy-4-methylthiazol-5(2H)-ylidene]ethyl phosphate. Lys135 provides a ligand contact to 4-amino-2-methyl-5-(diphosphooxymethyl)pyrimidine. 2-[(2R,5Z)-2-carboxy-4-methylthiazol-5(2H)-ylidene]ethyl phosphate is bound at residue Gly162.

The protein belongs to the thiamine-phosphate synthase family. Mg(2+) is required as a cofactor.

The catalysed reaction is 2-[(2R,5Z)-2-carboxy-4-methylthiazol-5(2H)-ylidene]ethyl phosphate + 4-amino-2-methyl-5-(diphosphooxymethyl)pyrimidine + 2 H(+) = thiamine phosphate + CO2 + diphosphate. It carries out the reaction 2-(2-carboxy-4-methylthiazol-5-yl)ethyl phosphate + 4-amino-2-methyl-5-(diphosphooxymethyl)pyrimidine + 2 H(+) = thiamine phosphate + CO2 + diphosphate. The enzyme catalyses 4-methyl-5-(2-phosphooxyethyl)-thiazole + 4-amino-2-methyl-5-(diphosphooxymethyl)pyrimidine + H(+) = thiamine phosphate + diphosphate. Its pathway is cofactor biosynthesis; thiamine diphosphate biosynthesis; thiamine phosphate from 4-amino-2-methyl-5-diphosphomethylpyrimidine and 4-methyl-5-(2-phosphoethyl)-thiazole: step 1/1. Functionally, condenses 4-methyl-5-(beta-hydroxyethyl)thiazole monophosphate (THZ-P) and 2-methyl-4-amino-5-hydroxymethyl pyrimidine pyrophosphate (HMP-PP) to form thiamine monophosphate (TMP). The sequence is that of Thiamine-phosphate synthase from Pseudomonas putida (strain W619).